Reading from the N-terminus, the 48-residue chain is Large ribosomal subunit protein bL32 (48 aa).

Residues 1 to 20 (MAVPKRRVSKTRAAKRRTHY) are compositionally biased toward basic residues. The disordered stretch occupies residues 1-48 (MAVPKRRVSKTRAAKRRTHYKVSLPIPVKDKDGSWKLPHRINTKTGEY).

The protein belongs to the bacterial ribosomal protein bL32 family.

The protein is Large ribosomal subunit protein bL32 of Campylobacter hominis (strain ATCC BAA-381 / DSM 21671 / CCUG 45161 / LMG 19568 / NCTC 13146 / CH001A).